A 438-amino-acid polypeptide reads, in one-letter code: Glutamyl-tRNA(Gln) amidotransferase subunit D (438 aa).

Residues 92–422 (PTITILGTGG…REAKKMMLTN (331 aa)) enclose the Asparaginase/glutaminase domain. Active-site residues include Thr-102, Thr-178, Asp-179, and Lys-256.

Belongs to the asparaginase 1 family. GatD subfamily. As to quaternary structure, heterodimer of GatD and GatE.

The enzyme catalyses L-glutamyl-tRNA(Gln) + L-glutamine + ATP + H2O = L-glutaminyl-tRNA(Gln) + L-glutamate + ADP + phosphate + H(+). Functionally, allows the formation of correctly charged Gln-tRNA(Gln) through the transamidation of misacylated Glu-tRNA(Gln) in organisms which lack glutaminyl-tRNA synthetase. The reaction takes place in the presence of glutamine and ATP through an activated gamma-phospho-Glu-tRNA(Gln). The GatDE system is specific for glutamate and does not act on aspartate. The polypeptide is Glutamyl-tRNA(Gln) amidotransferase subunit D (Pyrococcus furiosus (strain ATCC 43587 / DSM 3638 / JCM 8422 / Vc1)).